Here is an 84-residue protein sequence, read N- to C-terminus: Small ribosomal subunit protein bS16c (84 aa).

Belongs to the bacterial ribosomal protein bS16 family.

The protein localises to the plastid. The protein resides in the chloroplast. This Anthoceros angustus (Hornwort) protein is Small ribosomal subunit protein bS16c.